The sequence spans 746 residues: Stromal interaction molecule 2 (746 aa).

An N-terminal signal peptide occupies residues 1–14 (MLLFGLLVAGVADG). At 15–218 (CDLVPRHLRG…RPPHNWMKDF (204 aa)) the chain is on the extracellular side. At Ser-28 the chain carries Phosphoserine. The EF-hand domain maps to 67-102 (FSLEALQTIHKQMDDDKDGGIEVDESDEFIREDMKY). Ca(2+)-binding residues include Asp-80, Asp-82, Asp-84, and Glu-91. A glycan (N-linked (GlcNAc...) asparagine) is linked at Asn-135. The region spanning 136–204 (WTLEDTLQWL…QLKALDVVLF (69 aa)) is the SAM domain. The helical transmembrane segment at 219 to 235 (ILTISIVIGVGGCWFAY) threads the bilayer. Residues 236 to 746 (TQNKTSKEHV…IKSLFKKKSK (511 aa)) lie on the Cytoplasmic side of the membrane. Residues 247–394 (KMMKDLESLQ…EKIKKKRSTV (148 aa)) adopt a coiled-coil conformation. 2 disordered regions span residues 490-562 (PIVP…PDIL) and 592-651 (DTAS…RGSP). Residue Ser-523 is modified to Phosphoserine. A compositionally biased stretch (low complexity) spans 527 to 539 (QRAQLPAHAPLAA). Residues 540-549 (HPRHPHHPQH) show a composition bias toward basic residues. Ser-609 and Ser-621 each carry phosphoserine. A compositionally biased stretch (basic and acidic residues) spans 625–637 (ISRDELSLEDSSR). Phosphoserine occurs at positions 640, 650, 661, 665, 680, and 697. Residues 684–746 (LSSGIPVPHP…IKSLFKKKSK (63 aa)) form a disordered region. The segment covering 723–732 (DLCHNGEKSK) has biased composition (basic and acidic residues). A compositionally biased stretch (basic residues) spans 733–746 (KPSKIKSLFKKKSK).

Oligomer with STIM1. Interacts with ORAI1. Post-translationally, glycosylated. In terms of processing, phosphorylated predominantly on Ser residues.

Its subcellular location is the endoplasmic reticulum membrane. Functionally, plays a role in mediating store-operated Ca(2+) entry (SOCE), a Ca(2+) influx following depletion of intracellular Ca(2+) stores. Functions as a highly sensitive Ca(2+) sensor in the endoplasmic reticulum which activates both store-operated and store-independent Ca(2+)-influx. Regulates basal cytosolic and endoplasmic reticulum Ca(2+) concentrations. Upon mild variations of the endoplasmic reticulum Ca(2+) concentration, translocates from the endoplasmic reticulum to the plasma membrane where it probably activates the Ca(2+) release-activated Ca(2+) (CRAC) channels ORAI1, ORAI2 and ORAI3. May inhibit STIM1-mediated Ca(2+) influx. The protein is Stromal interaction molecule 2 (Stim2) of Mus musculus (Mouse).